A 407-amino-acid polypeptide reads, in one-letter code: Phosphonoacetate hydrolase (407 aa).

Residues Asp25, Thr64, Asp202, His206, Asp241, His242, and His368 each coordinate Zn(2+). Residues Thr64 and Asp202 each contribute to the substrate site. Substrate-binding residues include His242 and His368.

It belongs to the alkaline phosphatase family. PhnA subfamily. As to quaternary structure, homodimer. It depends on Zn(2+) as a cofactor.

The catalysed reaction is phosphonoacetate + H2O = acetate + phosphate + H(+). Specifically hydrolyzes phosphonoacetate. Does not have activity on other organophosphonates or acetates. The sequence is that of Phosphonoacetate hydrolase from Pseudomonas putida (Arthrobacter siderocapsulatus).